The primary structure comprises 159 residues: Transcription elongation factor GreA (159 aa).

A coiled-coil region spans residues 43–76 (LSENAEYDAAREEQSQLEAKIGDLENKLASATIL).

It belongs to the GreA/GreB family.

Functionally, necessary for efficient RNA polymerase transcription elongation past template-encoded arresting sites. The arresting sites in DNA have the property of trapping a certain fraction of elongating RNA polymerases that pass through, resulting in locked ternary complexes. Cleavage of the nascent transcript by cleavage factors such as GreA or GreB allows the resumption of elongation from the new 3'terminus. GreA releases sequences of 2 to 3 nucleotides. The polypeptide is Transcription elongation factor GreA (Chlorobaculum parvum (strain DSM 263 / NCIMB 8327) (Chlorobium vibrioforme subsp. thiosulfatophilum)).